The following is a 351-amino-acid chain: Fe-S cluster assembly protein DRE2 (351 aa).

The N-terminal SAM-like domain stretch occupies residues 1-151 (MATTGRVLLL…KPDIGAQQAI (151 aa)). Disordered regions lie at residues 93–118 (RNRE…RYND) and 157–186 (RRRK…PSSN). Composition is skewed to polar residues over residues 105 to 114 (GNGSNANSSR) and 167 to 186 (TLAS…PSSN). The linker stretch occupies residues 152–243 (PLKLSRRRKE…EDELLDEDDM (92 aa)). The [2Fe-2S] cluster site is built by Cys253, Cys264, Cys267, and Cys269. Positions 253–269 (CRPKPGKRRRACKDCSC) are fe-S binding site A. [4Fe-4S] cluster-binding residues include Cys314, Cys317, Cys325, and Cys328. 2 short sequence motifs (cx2C motif) span residues 314 to 317 (CGNC) and 325 to 328 (CDGC). A fe-S binding site B region spans residues 314 to 328 (CGNCSLGDAFRCDGC).

The protein belongs to the anamorsin family. As to quaternary structure, monomer. Interacts with TAH18. Interacts with MIA40. The cofactor is [2Fe-2S] cluster. [4Fe-4S] cluster is required as a cofactor.

Its subcellular location is the cytoplasm. The protein resides in the mitochondrion intermembrane space. Functionally, component of the cytosolic iron-sulfur (Fe-S) protein assembly (CIA) machinery required for the maturation of extramitochondrial Fe-S proteins. Part of an electron transfer chain functioning in an early step of cytosolic Fe-S biogenesis, facilitating the de novo assembly of a [4Fe-4S] cluster on the scaffold complex CFD1-NBP35. Electrons are transferred to DRE2 from NADPH via the FAD- and FMN-containing protein TAH18. TAH18-DRE2 are also required for the assembly of the diferric tyrosyl radical cofactor of ribonucleotide reductase (RNR), probably by providing electrons for reduction during radical cofactor maturation in the catalytic small subunit RNR2. In Ajellomyces capsulatus (strain NAm1 / WU24) (Darling's disease fungus), this protein is Fe-S cluster assembly protein DRE2.